Consider the following 195-residue polypeptide: MARTQQQRREETVARLLQASIDTIIEVGYARASAAVITKRAGVSVGALFRHFETMGDFMAATAYEVLRRQLETFTKQVAEIPADRPALPAALTILRDITAGSTNAVLYELMVAARTDEKLKETLQNVLGQYSAKIHDAARALPGAESFPEETFPVIVALMTNVFDGAAIVRGVLPQPELEEQRIPMLTALLTAGL.

The region spanning 10–70 (EETVARLLQA…ATAYEVLRRQ (61 aa)) is the HTH tetR-type domain. Residues 33–52 (SAAVITKRAGVSVGALFRHF) constitute a DNA-binding region (H-T-H motif).

This is an uncharacterized protein from Mycobacterium tuberculosis (strain CDC 1551 / Oshkosh).